Reading from the N-terminus, the 88-residue chain is Small ribosomal subunit protein bS20 (88 aa).

It belongs to the bacterial ribosomal protein bS20 family.

In terms of biological role, binds directly to 16S ribosomal RNA. This is Small ribosomal subunit protein bS20 from Methylorubrum populi (strain ATCC BAA-705 / NCIMB 13946 / BJ001) (Methylobacterium populi).